The following is a 37-amino-acid chain: Large ribosomal subunit protein bL36 (37 aa).

This sequence belongs to the bacterial ribosomal protein bL36 family.

The protein is Large ribosomal subunit protein bL36 of Halothermothrix orenii (strain H 168 / OCM 544 / DSM 9562).